A 236-amino-acid polypeptide reads, in one-letter code: Proteasome subunit alpha (236 aa).

Belongs to the peptidase T1A family. In terms of assembly, the 20S proteasome core is composed of 14 alpha and 14 beta subunits that assemble into four stacked heptameric rings, resulting in a barrel-shaped structure. The two inner rings, each composed of seven catalytic beta subunits, are sandwiched by two outer rings, each composed of seven alpha subunits. The catalytic chamber with the active sites is on the inside of the barrel. Has a gated structure, the ends of the cylinder being occluded by the N-termini of the alpha-subunits. Is capped by the proteasome-associated ATPase, ARC.

It is found in the cytoplasm. It functions in the pathway protein degradation; proteasomal Pup-dependent pathway. With respect to regulation, the formation of the proteasomal ATPase ARC-20S proteasome complex, likely via the docking of the C-termini of ARC into the intersubunit pockets in the alpha-rings, may trigger opening of the gate for substrate entry. Interconversion between the open-gate and close-gate conformations leads to a dynamic regulation of the 20S proteasome proteolysis activity. In terms of biological role, component of the proteasome core, a large protease complex with broad specificity involved in protein degradation. In Jonesia denitrificans (strain ATCC 14870 / DSM 20603 / BCRC 15368 / CIP 55.134 / JCM 11481 / NBRC 15587 / NCTC 10816 / Prevot 55134) (Listeria denitrificans), this protein is Proteasome subunit alpha.